The chain runs to 151 residues: Large ribosomal subunit protein bL9 (151 aa).

It belongs to the bacterial ribosomal protein bL9 family.

Functionally, binds to the 23S rRNA. In Rhodococcus erythropolis (strain PR4 / NBRC 100887), this protein is Large ribosomal subunit protein bL9.